A 339-amino-acid chain; its full sequence is HPr kinase/phosphorylase (339 aa).

Catalysis depends on residues His153 and Lys174. 168-175 provides a ligand contact to ATP; it reads GKSGLGKS. Residue Ser175 participates in Mg(2+) binding. Catalysis depends on Asp192, which acts as the Proton acceptor; for phosphorylation activity. Proton donor; for dephosphorylation activity. The tract at residues 216–225 is important for the catalytic mechanism of both phosphorylation and dephosphorylation; the sequence is MEIRGLGVVD. Residue Glu217 participates in Mg(2+) binding. Arg258 is a catalytic residue. An important for the catalytic mechanism of dephosphorylation region spans residues 279–284; the sequence is PINPGK.

This sequence belongs to the HPrK/P family. As to quaternary structure, homohexamer. Mg(2+) serves as cofactor.

The catalysed reaction is [HPr protein]-L-serine + ATP = [HPr protein]-O-phospho-L-serine + ADP + H(+). It catalyses the reaction [HPr protein]-O-phospho-L-serine + phosphate + H(+) = [HPr protein]-L-serine + diphosphate. Its function is as follows. Catalyzes the ATP- as well as the pyrophosphate-dependent phosphorylation of a specific serine residue in HPr, a phosphocarrier protein of the phosphoenolpyruvate-dependent sugar phosphotransferase system (PTS). HprK/P also catalyzes the pyrophosphate-producing, inorganic phosphate-dependent dephosphorylation (phosphorolysis) of seryl-phosphorylated HPr (P-Ser-HPr). This is HPr kinase/phosphorylase from Chlorobium phaeobacteroides (strain BS1).